Here is a 292-residue protein sequence, read N- to C-terminus: Homoserine kinase (292 aa).

Residue 84–94 (PLSRGLGSSSA) participates in ATP binding.

It belongs to the GHMP kinase family. Homoserine kinase subfamily.

The protein localises to the cytoplasm. The enzyme catalyses L-homoserine + ATP = O-phospho-L-homoserine + ADP + H(+). Its pathway is amino-acid biosynthesis; L-threonine biosynthesis; L-threonine from L-aspartate: step 4/5. Functionally, catalyzes the ATP-dependent phosphorylation of L-homoserine to L-homoserine phosphate. The sequence is that of Homoserine kinase from Campylobacter jejuni subsp. jejuni serotype O:6 (strain 81116 / NCTC 11828).